We begin with the raw amino-acid sequence, 773 residues long: Ribosomal protein S6 kinase alpha-4 (773 aa).

In terms of domain architecture, Protein kinase 1 spans 33–301 (FALLKVLGTG…AQEVKSHPFF (269 aa)). Residues 39–47 (LGTGAYGKV) and K65 each bind ATP. D161 acts as the Proton acceptor in catalysis. S196 is modified (phosphoserine; by autocatalysis). The 70-residue stretch at 302 to 371 (QGLDWVALAA…VAPSILFDHN (70 aa)) folds into the AGC-kinase C-terminal domain. The residue at position 343 (S343) is a Phosphoserine; by MAPK1, MAPK3 and MAPK14. S347 carries the phosphoserine modification. Phosphoserine; by autocatalysis occurs at positions 360 and 365. ATP-binding positions include 417 to 425 (LGQGSFSVC) and K440. Residues 417 to 674 (LGQGSFSVCR…LEGLRSSSWL (258 aa)) enclose the Protein kinase 2 domain. D530 serves as the catalytic Proton acceptor. T542 bears the Phosphothreonine mark. T568 is subject to Phosphothreonine; by MAPK1, MAPK3 and MAPK14. S634 and S678 each carry phosphoserine. 2 disordered regions span residues 674 to 696 (LQDGSARSSPPLRTPDVLESSGP) and 728 to 773 (AKRR…LSPS). T687 carries the phosphothreonine modification. Phosphoserine; by autocatalysis occurs at positions 737 and 745.

Belongs to the protein kinase superfamily. AGC Ser/Thr protein kinase family. S6 kinase subfamily. As to quaternary structure, forms a complex with either MAPK1/ERK2 or MAPK3/ERK1 in quiescent cells which transiently dissociates following mitogenic stimulation. Also associates with MAPK14/p38-alpha. Activated RPS6KA4 associates with and phosphorylates the NF-kappa-B p65 subunit RELA. Mg(2+) is required as a cofactor. Ser-343 and Thr-568 phosphorylation is required for kinase activity. Ser-343 and Ser-196 are autophosphorylated by the C-terminal kinase domain, and their phosphorylation is essential for the catalytic activity of the N-terminal kinase domain. Phosphorylated at Ser-343, Thr-568 and Thr-687 by MAPK1/ERK2, MAPK3/ERK1 and MAPK14/p38-alpha. Autophosphorylated at Ser-737 and Ser-745 by the N-terminal kinase domain.

The protein resides in the nucleus. It catalyses the reaction L-seryl-[protein] + ATP = O-phospho-L-seryl-[protein] + ADP + H(+). The enzyme catalyses L-threonyl-[protein] + ATP = O-phospho-L-threonyl-[protein] + ADP + H(+). With respect to regulation, activated by phosphorylation at Ser-343, Thr-568 and Thr-687 by MAPK1/ERK2, MAPK3/ERK1 and MAPK14/p38-alpha, and by further autophosphorylation of Ser-196, Ser-360 and Ser-365 by the activated C-terminal kinase domain. Its function is as follows. Serine/threonine-protein kinase that is required for the mitogen or stress-induced phosphorylation of the transcription factors CREB1 and ATF1 and for the regulation of the transcription factor RELA, and that contributes to gene activation by histone phosphorylation and functions in the regulation of inflammatory genes. Phosphorylates CREB1 and ATF1 in response to mitogenic or stress stimuli such as UV-C irradiation, epidermal growth factor (EGF) and anisomycin. Plays an essential role in the control of RELA transcriptional activity in response to TNF. Phosphorylates 'Ser-10' of histone H3 in response to mitogenics, stress stimuli and EGF, which results in the transcriptional activation of several immediate early genes, including proto-oncogenes c-fos/FOS and c-jun/JUN. May also phosphorylate 'Ser-28' of histone H3. Mediates the mitogen- and stress-induced phosphorylation of high mobility group protein 1 (HMGN1/HMG14). In lipopolysaccharide-stimulated primary macrophages, acts downstream of the Toll-like receptor TLR4 to limit the production of pro-inflammatory cytokines. Functions probably by inducing transcription of the MAP kinase phosphatase DUSP1 and the anti-inflammatory cytokine interleukin 10 (IL10), via CREB1 and ATF1 transcription factors. The polypeptide is Ribosomal protein S6 kinase alpha-4 (Rps6ka4) (Mus musculus (Mouse)).